The following is a 199-amino-acid chain: LexA repressor (199 aa).

The H-T-H motif DNA-binding region spans 28 to 47; sequence IRDIAKHFKLTPRGAHIHVI. Active-site for autocatalytic cleavage activity residues include serine 120 and lysine 157.

Belongs to the peptidase S24 family. Homodimer.

It catalyses the reaction Hydrolysis of Ala-|-Gly bond in repressor LexA.. Functionally, represses a number of genes involved in the response to DNA damage (SOS response), including recA and lexA. In the presence of single-stranded DNA, RecA interacts with LexA causing an autocatalytic cleavage which disrupts the DNA-binding part of LexA, leading to derepression of the SOS regulon and eventually DNA repair. In Thermosipho melanesiensis (strain DSM 12029 / CIP 104789 / BI429), this protein is LexA repressor.